Consider the following 763-residue polypeptide: MAVFKSWNLALLSSLFIPALCQSNYPDCTTGPLSELPICDTSLSPLERAKSLVSALTLEEKINNTGHEAAGSSRLGLPAYNWWNEALHGVAEKHGVSFEESGDFSYATSFPAPIVLGAAFNDALIRRVAEIISTEARAFSNSDHAGIDYWTPNVNPFKDPRWGRGQETPGEDPLHCSRYVKEFVGGLQGDDPEKPKVVATCKHLAAYDLEEWGGVSRFEFDAKVSAVDLLEYYLPPFKTCAVDASVGAFMCSYNALNGVPACADRYLLQTVLREHWGWEGPGHWVTGDCGAVERIQTYHHYVESGPEAAAAALNAGVDLDCGTWLPSYLGEAERQGLISNETLDAALTRLYTSLVQLGYFDPAEGQPLRSLGWDDVATSEAEELAKTVAIQGTVLLKNIDWTLPLKANGTLALIGPFINFTTELQSNYAGPAKHIPTMIEAAERLGYNVLTAPGTEVNSTSTDGFDDALAIAAEADALIFFGGIDNTVEEESLDRTRIDWPGNQEELILELAELGRPLTVVQFGGGQVDDSALLASAGVGAIVWAGYPSQAGGAGVFDVLTGKAAPAGRLPITQYPKSYVDEVPMTDMNLQPGTDNPGRTYRWYEDAVLPFGFGLHYTTFNVSWAKKAFGPYDAATLARGKNPSSNIVDTFSLAVTNTGDVASDYVALVFASAPELGAQPAPIKTLVGYSRASLIKPGETRKVDVEVTVAPLTRATEDGRVVLYPGEYTLLVDVNDEYPTAKFEIKGDVQVLEKFPLSGNDSD.

An N-terminal signal peptide occupies residues 1–23; the sequence is MAVFKSWNLALLSSLFIPALCQS. Asparagine 63 is a glycosylation site (N-linked (GlcNAc...) asparagine). Residue aspartate 288 is part of the active site. 6 N-linked (GlcNAc...) asparagine glycosylation sites follow: asparagine 340, asparagine 408, asparagine 419, asparagine 458, asparagine 621, and asparagine 760.

It belongs to the glycosyl hydrolase 3 family.

The protein localises to the secreted. The catalysed reaction is Hydrolysis of (1-&gt;4)-beta-D-xylans, to remove successive D-xylose residues from the non-reducing termini.. It functions in the pathway glycan degradation; xylan degradation. Its function is as follows. Xylan 1,4-beta-xylosidase involved in the hydrolysis of xylan, a major structural heterogeneous polysaccharide found in plant biomass representing the second most abundant polysaccharide in the biosphere, after cellulose. Active against rye arabinoxylan and xylohexaose, but not paranitrophenyl-beta-xyloside. In Emericella nidulans (strain FGSC A4 / ATCC 38163 / CBS 112.46 / NRRL 194 / M139) (Aspergillus nidulans), this protein is Exo-1,4-beta-xylosidase bxlB (bxlB).